The following is a 75-amino-acid chain: ATP synthase subunit c (75 aa).

The next 2 membrane-spanning stretches (helical) occupy residues 13 to 33 (LNVV…GILI) and 54 to 74 (MFLG…LAFI).

It belongs to the ATPase C chain family. F-type ATPases have 2 components, F(1) - the catalytic core - and F(0) - the membrane proton channel. F(1) has five subunits: alpha(3), beta(3), gamma(1), delta(1), epsilon(1). F(0) has three main subunits: a(1), b(2) and c(10-14). The alpha and beta chains form an alternating ring which encloses part of the gamma chain. F(1) is attached to F(0) by a central stalk formed by the gamma and epsilon chains, while a peripheral stalk is formed by the delta and b chains.

The protein resides in the cell membrane. Its function is as follows. F(1)F(0) ATP synthase produces ATP from ADP in the presence of a proton or sodium gradient. F-type ATPases consist of two structural domains, F(1) containing the extramembraneous catalytic core and F(0) containing the membrane proton channel, linked together by a central stalk and a peripheral stalk. During catalysis, ATP synthesis in the catalytic domain of F(1) is coupled via a rotary mechanism of the central stalk subunits to proton translocation. In terms of biological role, key component of the F(0) channel; it plays a direct role in translocation across the membrane. A homomeric c-ring of between 10-14 subunits forms the central stalk rotor element with the F(1) delta and epsilon subunits. The polypeptide is ATP synthase subunit c (Bifidobacterium adolescentis (strain ATCC 15703 / DSM 20083 / NCTC 11814 / E194a)).